We begin with the raw amino-acid sequence, 408 residues long: LL-diaminopimelate aminotransferase (408 aa).

Substrate is bound by residues Y15 and G42. Pyridoxal 5'-phosphate-binding positions include Y72, 108–109 (SK), Y132, N187, Y218, and 246–248 (SFS). Residues K109, Y132, and N187 each coordinate substrate. K249 is modified (N6-(pyridoxal phosphate)lysine). Pyridoxal 5'-phosphate-binding residues include R257 and N292. Positions 292 and 388 each coordinate substrate.

This sequence belongs to the class-I pyridoxal-phosphate-dependent aminotransferase family. LL-diaminopimelate aminotransferase subfamily. As to quaternary structure, homodimer. Pyridoxal 5'-phosphate is required as a cofactor.

It carries out the reaction (2S,6S)-2,6-diaminopimelate + 2-oxoglutarate = (S)-2,3,4,5-tetrahydrodipicolinate + L-glutamate + H2O + H(+). It participates in amino-acid biosynthesis; L-lysine biosynthesis via DAP pathway; LL-2,6-diaminopimelate from (S)-tetrahydrodipicolinate (aminotransferase route): step 1/1. Involved in the synthesis of meso-diaminopimelate (m-DAP or DL-DAP), required for both lysine and peptidoglycan biosynthesis. Catalyzes the direct conversion of tetrahydrodipicolinate to LL-diaminopimelate. The chain is LL-diaminopimelate aminotransferase from Prochlorococcus marinus (strain SARG / CCMP1375 / SS120).